Reading from the N-terminus, the 440-residue chain is Actin-like protein 7A (440 aa).

Residues 1-27 (MSLDAVWAPQTANIGDGPAKKASDQTS) form a disordered region. Positions 36–56 (ASLRDGPAKRAVWVRRDNAEK) are required for interaction with TES.

This sequence belongs to the actin family. As to quaternary structure, interacts (via N-terminus) with TES (via LIM domain 2). Heterodimer with TES; the heterodimer interacts with ENAH to form a heterotrimer. Interacts with ACTL9. Interacts with CYLC1; the interaction may be relevant for proper acrosome attachment to the nuclear envelope. Detected in testis. Detected at the acrosome of round spermatids (at protein level).

It is found in the cytoplasm. The protein resides in the cytoskeleton. Its subcellular location is the golgi apparatus. The protein localises to the nucleus. Its function is as follows. Essential for normal spermatogenesis and male fertility. Required for normal sperm head morphology, acroplaxome formation, acrosome attachment, and acrosome granule stability. May anchor and stabilize acrosomal adherence to the acroplaxome at least in part by facilitating the presence of F-actin in the subacrosomal space. May play an important role in formation and fusion of Golgi-derived vesicles during acrosome biogenesis. The chain is Actin-like protein 7A (Actl7a) from Rattus norvegicus (Rat).